A 787-amino-acid polypeptide reads, in one-letter code: Pyridoxal-dependent decarboxylase domain-containing protein 1 (787 aa).

A compositionally biased stretch (basic and acidic residues) spans 26–44 (MLEKSPRRTEEENGKKPVS). Residues 26-52 (MLEKSPRRTEEENGKKPVSEDIPGPLQ) are disordered. Position 652 is a phosphoserine (S652). The tract at residues 682–787 (QGTGVTPPPT…SQVEELERLR (106 aa)) is disordered. Residues T687 and T691 each carry the phosphothreonine modification. S710, S718, S722, and S748 each carry phosphoserine. Basic and acidic residues predominate over residues 725–748 (HIEDLEKVEQLSSGLEHDNLEAHS). Residues 759–771 (TARQTEALQNQAQ) are compositionally biased toward polar residues. Basic and acidic residues predominate over residues 772 to 787 (HQEDDHSQVEELERLR). At S778 the chain carries Phosphoserine.

Belongs to the group II decarboxylase family. Pyridoxal 5'-phosphate serves as cofactor.

The polypeptide is Pyridoxal-dependent decarboxylase domain-containing protein 1 (Pdxdc1) (Mus musculus (Mouse)).